Here is a 706-residue protein sequence, read N- to C-terminus: Cyclic nucleotide-gated channel alpha-3 (706 aa).

The Cytoplasmic portion of the chain corresponds to 1 to 189; that stretch reads MAKISTQYSH…MDPSSNMYYH (189 aa). The interval 113 to 177 is disordered; the sequence is RESHVQFNVG…PKKEEKKKDS (65 aa). Residues 147–177 show a composition bias toward basic and acidic residues; that stretch reads SEKDDKAKKEEKEKKEEKKENPKKEEKKKDS. Residues 190 to 211 traverse the membrane as a helical segment; sequence WLTVIAVPVFYNWCLLVCRACF. At 212-217 the chain is on the extracellular side; the sequence is DELQSE. The chain crosses the membrane as a helical span at residues 218 to 238; it reads HLMLWLVLDYSADILYGMDML. At 239–265 the chain is on the cytoplasmic side; the sequence is VRARTGFLEQGLMVMDASRLWKHYTQT. A helical transmembrane segment spans residues 266–285; it reads LHFKLDVLSLVPTDLAYFKL. The Extracellular segment spans residues 286-289; the sequence is GMNY. The helical transmembrane segment at 290-307 threads the bilayer; that stretch reads PELRFNRLLKLARLFEFF. Residues 308-317 lie on the Cytoplasmic side of the membrane; that stretch reads DRTETRTNYP. An ion conduction pathway region spans residues 317 to 425; the sequence is PNMFRIGNLV…GNVGSMISNM (109 aa). A helical membrane pass occupies residues 318 to 340; sequence NMFRIGNLVLYILIIIHWNACIY. The Extracellular portion of the chain corresponds to 341 to 366; the sequence is FAISKFIGFGTDSWVYPNVSNPEYGR. Residue Asn-358 is glycosylated (N-linked (GalNAc...) asparagine). Helical transmembrane passes span 367–397 and 398–422; these read LSRKYIYSLYWSTLTLTTIGETPPPVKDEEY and LFVVIDFLVGVLIFATIVGNVGSMI. The tract at residues 384 to 387 is selectivity filter; the sequence is TIGE. At 423–706 the chain is on the cytoplasmic side; it reads SNMNASRAEF…DAPQTEASQP (284 aa). The interval 427-504 is C-linker; it reads ASRAEFQAKI…TLRKVRIFQD (78 aa). A cyclic nucleotide-binding domain region spans residues 507 to 627; that stretch reads AGLLVELVLK…EEKGRQILMK (121 aa). Residues Gly-567, Glu-568, Ser-570, Arg-583, Thr-584, and Asp-628 each contribute to the 3',5'-cyclic GMP site. The stretch at 645–688 forms a coiled coil; that stretch reads IEEKVEHLETSLDSLQTRFARLLAEYNATQMKVKQRLSQLESQV. The interval 685–706 is disordered; that stretch reads ESQVKMGLPPDGDAPQTEASQP.

The protein belongs to the cyclic nucleotide-gated cation channel (TC 1.A.1.5) family. CNGA3 subfamily. In terms of assembly, forms heterotetrameric channels composed of CNGA3 and CNGB3 subunits with 3:1 stoichiometry. In terms of tissue distribution, testis, kidney, retinal cone (at protein level) and heart.

The protein resides in the cell membrane. It carries out the reaction Ca(2+)(in) = Ca(2+)(out). It catalyses the reaction Na(+)(in) = Na(+)(out). The enzyme catalyses K(+)(in) = K(+)(out). The catalysed reaction is NH4(+)(in) = NH4(+)(out). It carries out the reaction Rb(+)(in) = Rb(+)(out). It catalyses the reaction Li(+)(in) = Li(+)(out). The enzyme catalyses Cs(+)(in) = Cs(+)(out). Its activity is regulated as follows. Ca(2+) influx is inhibited by extracellular Mg(2+) ions. Functionally, pore-forming subunit of the cone cyclic nucleotide-gated channel. Mediates cone photoresponses at bright light converting transient changes in intracellular cGMP levels into electrical signals. In the dark, cGMP levels are high and keep the channel open enabling a steady inward current carried by Na(+) and Ca(2+) ions that leads to membrane depolarization and neurotransmitter release from synaptic terminals. Upon photon absorption cGMP levels decline leading to channel closure and membrane hyperpolarization that ultimately slows neurotransmitter release and signals the presence of light, the end point of the phototransduction cascade. Pore-forming subunit of the gustatory cyclic nucleotide-gated channel. In the taste buds, may sense oral extracellular pH and conduct ion currents that modulate the excitability of taste cells. Conducts cGMP- and cAMP-gated ion currents, with permeability for monovalent and divalent cations. This Bos taurus (Bovine) protein is Cyclic nucleotide-gated channel alpha-3.